The sequence spans 510 residues: UDP-N-acetylmuramate--L-alanine ligase (510 aa).

Residues 1 to 25 form a disordered region; sequence MVETVGGKDAVAPAPARSPSPPAKN. 140 to 146 serves as a coordination point for ATP; the sequence is GTHGKTT.

Belongs to the MurCDEF family.

It localises to the cytoplasm. The enzyme catalyses UDP-N-acetyl-alpha-D-muramate + L-alanine + ATP = UDP-N-acetyl-alpha-D-muramoyl-L-alanine + ADP + phosphate + H(+). It participates in cell wall biogenesis; peptidoglycan biosynthesis. In terms of biological role, cell wall formation. In Synechococcus sp. (strain JA-3-3Ab) (Cyanobacteria bacterium Yellowstone A-Prime), this protein is UDP-N-acetylmuramate--L-alanine ligase.